The following is a 524-amino-acid chain: Cytochrome P450 1A1 (524 aa).

Residues 33–44 (TRTWVPKGLKSP) form a mitochondrial targeting signal region. Ser-71 carries an O-linked (GlcNAc) serine glycan. A substrate-binding site is contributed by Phe-228. Cys-461 lines the heme pocket.

This sequence belongs to the cytochrome P450 family. Both Cytochrome P450MT2A and Cytochrome P450MT2B interact with cytosolic chaperones HSP70 and HSP90; this interaction is required for initial targeting to mitochondria. P450MT2B interacts (via mitochondrial targeting signal) with TOMM40 (via N-terminus); this interaction is required for translocation across the mitochondrial outer membrane. Heme is required as a cofactor. Two forms; MT2A (long form) and MT2B (short form); are produced by NH2-terminal proteolytic cleavage. This cleavage activates a cryptic mitochondrial targeting signal. As to expression, liver.

Its subcellular location is the cytoplasm. The protein localises to the endoplasmic reticulum membrane. The protein resides in the mitochondrion inner membrane. It is found in the microsome membrane. It catalyses the reaction an organic molecule + reduced [NADPH--hemoprotein reductase] + O2 = an alcohol + oxidized [NADPH--hemoprotein reductase] + H2O + H(+). It carries out the reaction estrone + reduced [NADPH--hemoprotein reductase] + O2 = 2-hydroxyestrone + oxidized [NADPH--hemoprotein reductase] + H2O + H(+). The enzyme catalyses estrone + reduced [NADPH--hemoprotein reductase] + O2 = 4-hydroxyestrone + oxidized [NADPH--hemoprotein reductase] + H2O + H(+). The catalysed reaction is estrone + reduced [NADPH--hemoprotein reductase] + O2 = 6alpha-hydroxyestrone + oxidized [NADPH--hemoprotein reductase] + H2O + H(+). It catalyses the reaction estrone + reduced [NADPH--hemoprotein reductase] + O2 = 15alpha-hydroxyestrone + oxidized [NADPH--hemoprotein reductase] + H2O + H(+). It carries out the reaction estrone + reduced [NADPH--hemoprotein reductase] + O2 = 16alpha-hydroxyestrone + oxidized [NADPH--hemoprotein reductase] + H2O + H(+). The enzyme catalyses 17beta-estradiol + reduced [NADPH--hemoprotein reductase] + O2 = 2-hydroxy-17beta-estradiol + oxidized [NADPH--hemoprotein reductase] + H2O + H(+). The catalysed reaction is 17beta-estradiol + reduced [NADPH--hemoprotein reductase] + O2 = 4-hydroxy-17beta-estradiol + oxidized [NADPH--hemoprotein reductase] + H2O + H(+). It catalyses the reaction 17beta-estradiol + reduced [NADPH--hemoprotein reductase] + O2 = 6alpha-hydroxy-17beta-estradiol + oxidized [NADPH--hemoprotein reductase] + H2O + H(+). It carries out the reaction 17beta-estradiol + reduced [NADPH--hemoprotein reductase] + O2 = 7alpha-hydroxy-17beta-estradiol + oxidized [NADPH--hemoprotein reductase] + H2O + H(+). The enzyme catalyses 17beta-estradiol + reduced [NADPH--hemoprotein reductase] + O2 = 15alpha-hydroxy-17beta-estradiol + oxidized [NADPH--hemoprotein reductase] + H2O + H(+). The catalysed reaction is (5Z,8Z,11Z)-eicosatrienoate + reduced [NADPH--hemoprotein reductase] + O2 = 19-hydroxy-(5Z,8Z,11Z)-eicosatrienoate + oxidized [NADPH--hemoprotein reductase] + H2O + H(+). It catalyses the reaction (5Z,8Z,11Z,14Z)-eicosatetraenoate + reduced [NADPH--hemoprotein reductase] + O2 = 16-hydroxy-(5Z,8Z,11Z,14Z)-eicosatetraenoate + oxidized [NADPH--hemoprotein reductase] + H2O + H(+). It carries out the reaction (5Z,8Z,11Z,14Z)-eicosatetraenoate + reduced [NADPH--hemoprotein reductase] + O2 = 17-hydroxy-(5Z,8Z,11Z,14Z)-eicosatetraenoate + oxidized [NADPH--hemoprotein reductase] + H2O + H(+). The enzyme catalyses (5Z,8Z,11Z,14Z)-eicosatetraenoate + reduced [NADPH--hemoprotein reductase] + O2 = 18-hydroxy-(5Z,8Z,11Z,14Z)-eicosatetraenoate + oxidized [NADPH--hemoprotein reductase] + H2O + H(+). The catalysed reaction is (5Z,8Z,11Z,14Z)-eicosatetraenoate + reduced [NADPH--hemoprotein reductase] + O2 = 19-hydroxy-(5Z,8Z,11Z,14Z)-eicosatetraenoate + oxidized [NADPH--hemoprotein reductase] + H2O + H(+). It catalyses the reaction (5Z,8Z,11Z,14Z,17Z)-eicosapentaenoate + reduced [NADPH--hemoprotein reductase] + O2 = 19-hydroxy-(5Z,8Z,11Z,14Z,17Z)-eicosapentaenoate + oxidized [NADPH--hemoprotein reductase] + H2O + H(+). It carries out the reaction (5Z,8Z,11Z,14Z)-eicosatetraenoate + reduced [NADPH--hemoprotein reductase] + O2 = (8R,9S)-epoxy-(5Z,11Z,14Z)-eicosatrienoate + oxidized [NADPH--hemoprotein reductase] + H2O + H(+). The enzyme catalyses (5Z,8Z,11Z,14Z)-eicosatetraenoate + reduced [NADPH--hemoprotein reductase] + O2 = (11R,12S)-epoxy-(5Z,8Z,14Z)-eicosatrienoate + oxidized [NADPH--hemoprotein reductase] + H2O + H(+). The catalysed reaction is (5Z,8Z,11Z,14Z)-eicosatetraenoate + reduced [NADPH--hemoprotein reductase] + O2 = (11S,12R)-epoxy-(5Z,8Z,14Z)-eicosatrienoate + oxidized [NADPH--hemoprotein reductase] + H2O + H(+). It catalyses the reaction (5Z,8Z,11Z,14Z)-eicosatetraenoate + reduced [NADPH--hemoprotein reductase] + O2 = (14R,15S)-epoxy-(5Z,8Z,11Z)-eicosatrienoate + oxidized [NADPH--hemoprotein reductase] + H2O + H(+). It carries out the reaction (5Z,8Z,11Z,14Z,17Z)-eicosapentaenoate + reduced [NADPH--hemoprotein reductase] + O2 = (17R,18S)-epoxy-(5Z,8Z,11Z,14Z)-eicosatetraenoate + oxidized [NADPH--hemoprotein reductase] + H2O + H(+). The enzyme catalyses (4Z,7Z,10Z,13Z,16Z,19Z)-docosahexaenoate + reduced [NADPH--hemoprotein reductase] + O2 = (19S,20R)-epoxy-(4Z,7Z,10Z,13Z,16Z)-docosapentaenoate + oxidized [NADPH--hemoprotein reductase] + H2O + H(+). The catalysed reaction is (4Z,7Z,10Z,13Z,16Z,19Z)-docosahexaenoate + reduced [NADPH--hemoprotein reductase] + O2 = (19R,20S)-epoxy-(4Z,7Z,10Z,13Z,16Z)-docosapentaenoate + oxidized [NADPH--hemoprotein reductase] + H2O + H(+). It catalyses the reaction all-trans-retinol + reduced [NADPH--hemoprotein reductase] + O2 = all-trans-retinal + oxidized [NADPH--hemoprotein reductase] + 2 H2O + H(+). It carries out the reaction all-trans-retinal + reduced [NADPH--hemoprotein reductase] + O2 = all-trans-retinoate + oxidized [NADPH--hemoprotein reductase] + H2O + 2 H(+). The enzyme catalyses (13S)-hydroperoxy-(9Z,11E)-octadecadienoate = 13-oxo-(9Z,11E)-octadecadienoate + H2O. The catalysed reaction is (12S)-hydroperoxy-(5Z,8Z,10E,14Z)-eicosatetraenoate = 12-oxo-(5Z,8Z,10E,14Z)-eicosatetraenoate + H2O. It catalyses the reaction (15S)-hydroperoxy-(5Z,8Z,11Z,13E)-eicosatetraenoate = 15-oxo-(5Z,8Z,11Z,13E)-eicosatetraenoate + H2O. It carries out the reaction (5S)-hydroperoxy-(6E,8Z,11Z,14Z)-eicosatetraenoate = 5-oxo-(6E,8Z,11Z,14Z)-eicosatetraenoate + H2O. Its pathway is steroid hormone biosynthesis. It participates in lipid metabolism; fatty acid metabolism. It functions in the pathway cofactor metabolism; retinol metabolism. Its function is as follows. A cytochrome P450 monooxygenase involved in the metabolism of various endogenous substrates, including fatty acids, steroid hormones and vitamins. Mechanistically, uses molecular oxygen inserting one oxygen atom into a substrate, and reducing the second into a water molecule, with two electrons provided by NADPH via cytochrome P450 reductase (CPR; NADPH-ferrihemoprotein reductase). Catalyzes the hydroxylation of carbon-hydrogen bonds. Exhibits high catalytic activity for the formation of hydroxyestrogens from estrone (E1) and 17beta-estradiol (E2), namely 2-hydroxy E1 and E2, as well as D-ring hydroxylated E1 and E2 at the C15alpha and C16alpha positions. Displays different regioselectivities for polyunsaturated fatty acids (PUFA) hydroxylation. Catalyzes the epoxidation of double bonds of certain PUFA. Converts arachidonic acid toward epoxyeicosatrienoic acid (EET) regioisomers, 8,9-, 11,12-, and 14,15-EET, that function as lipid mediators in the vascular system. Displays an absolute stereoselectivity in the epoxidation of eicosapentaenoic acid (EPA) producing the 17(R),18(S) enantiomer. May play an important role in all-trans retinoic acid biosynthesis in extrahepatic tissues. Catalyzes two successive oxidative transformation of all-trans retinol to all-trans retinal and then to the active form all-trans retinoic acid. May also participate in eicosanoids metabolism by converting hydroperoxide species into oxo metabolites (lipoxygenase-like reaction, NADPH-independent). This chain is Cytochrome P450 1A1, found in Rattus norvegicus (Rat).